An 89-amino-acid chain; its full sequence is Small ribosomal subunit protein uS14A (89 aa).

Belongs to the universal ribosomal protein uS14 family. Part of the 30S ribosomal subunit. Contacts proteins S3 and S10.

Its function is as follows. Binds 16S rRNA, required for the assembly of 30S particles and may also be responsible for determining the conformation of the 16S rRNA at the A site. This Staphylococcus aureus (strain Newman) protein is Small ribosomal subunit protein uS14A.